A 268-amino-acid chain; its full sequence is MSRYEKMFARLNEKNQGAFVPFVTVCDPNAEQSYKIMETLVESGADALELGIPFSDPLADGPTIQGANIRALDSGATPDICFEQIGKIRAKYPDLPIGLLMYANLVYSRGIESFYERCAKAGIDSVLIADVPTNESAEFVAAAEKFGIHPIFIAPPTASDETLKQVSELGGGYTYLLSRAGVTGAETKANMPVDHMLEKLNQFNAPPALLGFGISEPAQVKQAIEAGAAGAISGSAVVKIIEAHVEQPQIMLDKLGEFVSAMKAATQK.

Active-site proton acceptor residues include Glu49 and Asp60.

It belongs to the TrpA family. Tetramer of two alpha and two beta chains.

It catalyses the reaction (1S,2R)-1-C-(indol-3-yl)glycerol 3-phosphate + L-serine = D-glyceraldehyde 3-phosphate + L-tryptophan + H2O. It functions in the pathway amino-acid biosynthesis; L-tryptophan biosynthesis; L-tryptophan from chorismate: step 5/5. The alpha subunit is responsible for the aldol cleavage of indoleglycerol phosphate to indole and glyceraldehyde 3-phosphate. The sequence is that of Tryptophan synthase alpha chain from Vibrio parahaemolyticus serotype O3:K6 (strain RIMD 2210633).